The sequence spans 477 residues: ATP synthase subunit beta (477 aa).

163–170 contacts ATP; sequence GGAGVGKT.

The protein belongs to the ATPase alpha/beta chains family. In terms of assembly, F-type ATPases have 2 components, CF(1) - the catalytic core - and CF(0) - the membrane proton channel. CF(1) has five subunits: alpha(3), beta(3), gamma(1), delta(1), epsilon(1). CF(0) has four main subunits: a(1), b(1), b'(1) and c(9-12).

It is found in the cellular thylakoid membrane. The catalysed reaction is ATP + H2O + 4 H(+)(in) = ADP + phosphate + 5 H(+)(out). In terms of biological role, produces ATP from ADP in the presence of a proton gradient across the membrane. The catalytic sites are hosted primarily by the beta subunits. The sequence is that of ATP synthase subunit beta from Synechococcus sp. (strain JA-2-3B'a(2-13)) (Cyanobacteria bacterium Yellowstone B-Prime).